A 270-amino-acid polypeptide reads, in one-letter code: Hydroxyethylthiazole kinase (270 aa).

Methionine 46 serves as a coordination point for substrate. ATP contacts are provided by arginine 120 and threonine 166. Glycine 193 lines the substrate pocket.

It belongs to the Thz kinase family. Requires Mg(2+) as cofactor.

The enzyme catalyses 5-(2-hydroxyethyl)-4-methylthiazole + ATP = 4-methyl-5-(2-phosphooxyethyl)-thiazole + ADP + H(+). It functions in the pathway cofactor biosynthesis; thiamine diphosphate biosynthesis; 4-methyl-5-(2-phosphoethyl)-thiazole from 5-(2-hydroxyethyl)-4-methylthiazole: step 1/1. Catalyzes the phosphorylation of the hydroxyl group of 4-methyl-5-beta-hydroxyethylthiazole (THZ). This chain is Hydroxyethylthiazole kinase, found in Herpetosiphon aurantiacus (strain ATCC 23779 / DSM 785 / 114-95).